Here is a 267-residue protein sequence, read N- to C-terminus: Dichloromethane dehalogenase (267 aa).

The region spanning 3–85 (TKLRYLHHPA…YLSEKYDCSS (83 aa)) is the GST N-terminal domain. Positions 91–224 (TLEERGHIQQ…AWQYENVRKY (134 aa)) constitute a GST C-terminal domain.

Belongs to the GST superfamily. Homohexamer.

The protein localises to the cytoplasm. It catalyses the reaction dichloromethane + H2O = formaldehyde + 2 chloride + 2 H(+). It participates in xenobiotic degradation; dichloromethane degradation. This Methylophilus leisingeri (strain DSM 6813 / VKM B-2013 / DM11) protein is Dichloromethane dehalogenase (dcmA).